The primary structure comprises 408 residues: Tryptophan synthase beta chain (408 aa).

N6-(pyridoxal phosphate)lysine is present on Lys-90.

Belongs to the TrpB family. As to quaternary structure, tetramer of two alpha and two beta chains. Pyridoxal 5'-phosphate serves as cofactor.

The enzyme catalyses (1S,2R)-1-C-(indol-3-yl)glycerol 3-phosphate + L-serine = D-glyceraldehyde 3-phosphate + L-tryptophan + H2O. The protein operates within amino-acid biosynthesis; L-tryptophan biosynthesis; L-tryptophan from chorismate: step 5/5. In terms of biological role, the beta subunit is responsible for the synthesis of L-tryptophan from indole and L-serine. This is Tryptophan synthase beta chain from Bacillus licheniformis (strain ATCC 14580 / DSM 13 / JCM 2505 / CCUG 7422 / NBRC 12200 / NCIMB 9375 / NCTC 10341 / NRRL NRS-1264 / Gibson 46).